A 679-amino-acid polypeptide reads, in one-letter code: Protein asunder (679 aa).

Positions 519-541 (RLKVNKTKDQYRLFYRELEQLIQ) form a coiled coil. Residues 564 to 610 (GDASNKSDPSAAHLRSYTESPLSPERLEPTNSVNSSSSSILKASKRR) are disordered. The Nuclear localization signal (NLS) motif lies at 604–610 (LKASKRR).

The protein belongs to the Integrator subunit 13 family. In terms of assembly, belongs to the multiprotein complex Integrator, at least composed of IntS1, IntS2, IntS3, IntS4, omd/IntS5, IntS6, defl/IntS7, IntS8, IntS9, IntS10, IntS11, IntS12, asun/IntS13, IntS14 and IntS15. The core complex associates with protein phosphatase 2A subunits mts/PP2A and Pp2A-29B, to form the Integrator-PP2A (INTAC) complex. In terms of processing, phosphorylated.

Its subcellular location is the nucleus. It is found in the cytoplasm. The protein localises to the perinuclear region. Its function is as follows. Component of the integrator complex, a multiprotein complex that terminates RNA polymerase II (Pol II) transcription in the promoter-proximal region of genes. The integrator complex provides a quality checkpoint during transcription elongation by driving premature transcription termination of transcripts that are unfavorably configured for transcriptional elongation: the complex terminates transcription by (1) catalyzing dephosphorylation of the C-terminal domain (CTD) of Pol II subunit Polr2A/Rbp1 and Spt5, and (2) degrading the exiting nascent RNA transcript via endonuclease activity. The integrator complex is also involved in the 3'-end processing of the U7 snRNA, and also the spliceosomal snRNAs U1, U2, U4 and U5. In Drosophila mojavensis (Fruit fly), this protein is Protein asunder (asun).